Here is a 146-residue protein sequence, read N- to C-terminus: Hemoglobin subunit beta (146 aa).

Val-1 is subject to N-acetylvaline. A Globin domain is found at 2-146; the sequence is HLSGEEKAAV…VANALAHKYH (145 aa). At Thr-12 the chain carries Phosphothreonine. Ser-44 is modified (phosphoserine). Residue Lys-59 is modified to N6-acetyllysine. His-63 is a heme b binding site. Lys-82 carries the post-translational modification N6-acetyllysine. His-92 contacts heme b. Cys-93 is modified (S-nitrosocysteine). Position 144 is an N6-acetyllysine (Lys-144).

The protein belongs to the globin family. In terms of assembly, heterotetramer of two alpha chains and two beta chains. In terms of tissue distribution, red blood cells.

Involved in oxygen transport from the lung to the various peripheral tissues. This Pteropus alecto (Black flying fox) protein is Hemoglobin subunit beta (HBB).